A 140-amino-acid polypeptide reads, in one-letter code: Small ribosomal subunit protein uS9A (140 aa).

This sequence belongs to the universal ribosomal protein uS9 family. In terms of assembly, component of the small ribosomal subunit (SSU). Mature yeast ribosomes consist of a small (40S) and a large (60S) subunit. The 40S small subunit contains 1 molecule of ribosomal RNA (18S rRNA) and at least 33 different proteins. The large 60S subunit contains 3 rRNA molecules (25S, 5.8S and 5S rRNA) and at least 46 different proteins.

Its subcellular location is the cytoplasm. In terms of biological role, component of the ribosome, a large ribonucleoprotein complex responsible for the synthesis of proteins in the cell. The small ribosomal subunit (SSU) binds messenger RNAs (mRNAs) and translates the encoded message by selecting cognate aminoacyl-transfer RNA (tRNA) molecules. The large subunit (LSU) contains the ribosomal catalytic site termed the peptidyl transferase center (PTC), which catalyzes the formation of peptide bonds, thereby polymerizing the amino acids delivered by tRNAs into a polypeptide chain. The nascent polypeptides leave the ribosome through a tunnel in the LSU and interact with protein factors that function in enzymatic processing, targeting, and the membrane insertion of nascent chains at the exit of the ribosomal tunnel. The sequence is that of Small ribosomal subunit protein uS9A (rps1601) from Schizosaccharomyces pombe (strain 972 / ATCC 24843) (Fission yeast).